The sequence spans 291 residues: Bifunctional protein FolD 1 (291 aa).

NADP(+)-binding positions include 167-169 (GAS), isoleucine 192, and isoleucine 233.

The protein belongs to the tetrahydrofolate dehydrogenase/cyclohydrolase family. As to quaternary structure, homodimer.

It catalyses the reaction (6R)-5,10-methylene-5,6,7,8-tetrahydrofolate + NADP(+) = (6R)-5,10-methenyltetrahydrofolate + NADPH. The catalysed reaction is (6R)-5,10-methenyltetrahydrofolate + H2O = (6R)-10-formyltetrahydrofolate + H(+). Its pathway is one-carbon metabolism; tetrahydrofolate interconversion. In terms of biological role, catalyzes the oxidation of 5,10-methylenetetrahydrofolate to 5,10-methenyltetrahydrofolate and then the hydrolysis of 5,10-methenyltetrahydrofolate to 10-formyltetrahydrofolate. This is Bifunctional protein FolD 1 from Pseudomonas putida (strain ATCC 47054 / DSM 6125 / CFBP 8728 / NCIMB 11950 / KT2440).